The sequence spans 389 residues: Lipid-A-disaccharide synthase (389 aa).

It belongs to the LpxB family.

It carries out the reaction a lipid X + a UDP-2-N,3-O-bis[(3R)-3-hydroxyacyl]-alpha-D-glucosamine = a lipid A disaccharide + UDP + H(+). It functions in the pathway bacterial outer membrane biogenesis; LPS lipid A biosynthesis. Functionally, condensation of UDP-2,3-diacylglucosamine and 2,3-diacylglucosamine-1-phosphate to form lipid A disaccharide, a precursor of lipid A, a phosphorylated glycolipid that anchors the lipopolysaccharide to the outer membrane of the cell. This is Lipid-A-disaccharide synthase from Burkholderia lata (strain ATCC 17760 / DSM 23089 / LMG 22485 / NCIMB 9086 / R18194 / 383).